A 328-amino-acid polypeptide reads, in one-letter code: Formimidoylglutamase (328 aa).

Residues H133, D159, H161, D163, D253, and D255 each coordinate Mn(2+).

This sequence belongs to the arginase family. Mn(2+) is required as a cofactor.

It catalyses the reaction N-formimidoyl-L-glutamate + H2O = formamide + L-glutamate. It participates in amino-acid degradation; L-histidine degradation into L-glutamate; L-glutamate from N-formimidoyl-L-glutamate (hydrolase route): step 1/1. Its function is as follows. Catalyzes the conversion of N-formimidoyl-L-glutamate to L-glutamate and formamide. In Streptococcus pyogenes serotype M3 (strain ATCC BAA-595 / MGAS315), this protein is Formimidoylglutamase.